Consider the following 1362-residue polypeptide: DNA-directed RNA polymerase subunit beta (1362 aa).

Belongs to the RNA polymerase beta chain family. In terms of assembly, the RNAP catalytic core consists of 2 alpha, 1 beta, 1 beta' and 1 omega subunit. When a sigma factor is associated with the core the holoenzyme is formed, which can initiate transcription.

It carries out the reaction RNA(n) + a ribonucleoside 5'-triphosphate = RNA(n+1) + diphosphate. DNA-dependent RNA polymerase catalyzes the transcription of DNA into RNA using the four ribonucleoside triphosphates as substrates. The polypeptide is DNA-directed RNA polymerase subunit beta (Acidithiobacillus ferrooxidans (strain ATCC 23270 / DSM 14882 / CIP 104768 / NCIMB 8455) (Ferrobacillus ferrooxidans (strain ATCC 23270))).